The sequence spans 205 residues: G-protein coupled receptor (205 aa).

5 helical membrane passes run 40–60, 71–91, 107–127, 151–171, and 185–205; these read GITLTASVPMIIIVITTMILY, FYVITLFASDFVLMWCVFFMT, LVYFIYHAVCSYSISMLAIIA, IGILLLASSMCAIPTALFVQI, and LSSPKAYELFLAVKIVFSFIW. A disulfide bridge links C105 with C181.

The protein belongs to the G-protein coupled receptor 1 family.

It localises to the host membrane. This is G-protein coupled receptor (U12) from Human herpesvirus 6B (strain Z29) (HHV-6 variant B).